A 346-amino-acid polypeptide reads, in one-letter code: Fusaric acid resistance protein FusC (346 aa).

Helical transmembrane passes span Val-10–Gly-30, Val-248–Val-268, Met-291–Pro-311, and Gly-315–Leu-335.

It belongs to the aromatic acid exporter ArAE (TC 2.A.85) family.

It is found in the cell membrane. Functionally, involved in the resistance (detoxification) of the fungal toxin fusaric acid. This is Fusaric acid resistance protein FusC (fusC) from Burkholderia cepacia (Pseudomonas cepacia).